The primary structure comprises 319 residues: MKISEIAKFLGIEYYGDDIEITALNSLNNASFSELSYCDGEKNSKKIASSGAGAILISKEFENLVSKDCVKLVVDNPHLSFALLSKLFAKPLISSEKKQSNIAKSAKIMPNVYIGENVQIADHVVIMAGAYIGDNVSIGEYTIIHPNAVIYNDTKIGKKCHLLANCVIGSDGFGYAHTKNGEHYKIYHNGNVILEDFVEVGACTTIDRAVFESTIIKQGTKIDNLVQVGHNCEIGENCLIVAQSGISGSSILGKNVTMGGQSATSGHLEIGDFATIAARGGVTKNLEGARVYGGFPIMLQKDWLKFQAKIITAFRDKHE.

Catalysis depends on histidine 230, which acts as the Proton acceptor.

It belongs to the transferase hexapeptide repeat family. LpxD subfamily. In terms of assembly, homotrimer.

The catalysed reaction is a UDP-3-O-[(3R)-3-hydroxyacyl]-alpha-D-glucosamine + a (3R)-hydroxyacyl-[ACP] = a UDP-2-N,3-O-bis[(3R)-3-hydroxyacyl]-alpha-D-glucosamine + holo-[ACP] + H(+). It participates in bacterial outer membrane biogenesis; LPS lipid A biosynthesis. Catalyzes the N-acylation of UDP-3-O-acylglucosamine using 3-hydroxyacyl-ACP as the acyl donor. Is involved in the biosynthesis of lipid A, a phosphorylated glycolipid that anchors the lipopolysaccharide to the outer membrane of the cell. This is UDP-3-O-acylglucosamine N-acyltransferase from Campylobacter lari (strain RM2100 / D67 / ATCC BAA-1060).